The chain runs to 125 residues: uncharacterized protein (125 aa).

A run of 3 helical transmembrane segments spans residues 20–42 (RNGGGTLVVAFAFTAFFSLLTIL), 57–76 (LMNAFVLGTITATFAKGVVV), and 81–103 (YLFVASLLAAAFSVLMILVYMAS).

It is found in the cell membrane. This is an uncharacterized protein from Archaeoglobus fulgidus (strain ATCC 49558 / DSM 4304 / JCM 9628 / NBRC 100126 / VC-16).